The following is a 170-amino-acid chain: Arginine repressor (170 aa).

This sequence belongs to the ArgR family.

Its subcellular location is the cytoplasm. The protein operates within amino-acid biosynthesis; L-arginine biosynthesis [regulation]. Regulates arginine biosynthesis genes. The sequence is that of Arginine repressor from Bifidobacterium longum (strain NCC 2705).